Here is a 484-residue protein sequence, read N- to C-terminus: Cobyric acid synthase (484 aa).

One can recognise a GATase cobBQ-type domain in the interval 251-438 (ALKIAVPVLS…LHGLFGNDEY (188 aa)). Catalysis depends on cysteine 333, which acts as the Nucleophile. Histidine 430 is a catalytic residue.

The protein belongs to the CobB/CobQ family. CobQ subfamily.

The protein operates within cofactor biosynthesis; adenosylcobalamin biosynthesis. Catalyzes amidations at positions B, D, E, and G on adenosylcobyrinic A,C-diamide. NH(2) groups are provided by glutamine, and one molecule of ATP is hydrogenolyzed for each amidation. The sequence is that of Cobyric acid synthase from Allorhizobium ampelinum (strain ATCC BAA-846 / DSM 112012 / S4) (Agrobacterium vitis (strain S4)).